The sequence spans 404 residues: Cysteine desulfurase IscS (404 aa).

Residues 75-76 (AT), asparagine 155, glutamine 183, and 203-205 (SAH) contribute to the pyridoxal 5'-phosphate site. Lysine 206 bears the N6-(pyridoxal phosphate)lysine mark. A pyridoxal 5'-phosphate-binding site is contributed by threonine 243. Cysteine 328 serves as the catalytic Cysteine persulfide intermediate. Residue cysteine 328 participates in [2Fe-2S] cluster binding.

The protein belongs to the class-V pyridoxal-phosphate-dependent aminotransferase family. NifS/IscS subfamily. Homodimer. Forms a heterotetramer with IscU, interacts with other sulfur acceptors. Pyridoxal 5'-phosphate serves as cofactor.

It is found in the cytoplasm. The enzyme catalyses (sulfur carrier)-H + L-cysteine = (sulfur carrier)-SH + L-alanine. It participates in cofactor biosynthesis; iron-sulfur cluster biosynthesis. Functionally, master enzyme that delivers sulfur to a number of partners involved in Fe-S cluster assembly, tRNA modification or cofactor biosynthesis. Catalyzes the removal of elemental sulfur atoms from cysteine to produce alanine. Functions as a sulfur delivery protein for Fe-S cluster synthesis onto IscU, an Fe-S scaffold assembly protein, as well as other S acceptor proteins. In Vibrio campbellii (strain ATCC BAA-1116), this protein is Cysteine desulfurase IscS.